Consider the following 297-residue polypeptide: UTP--glucose-1-phosphate uridylyltransferase (297 aa).

Belongs to the UDPGP type 2 family.

The enzyme catalyses alpha-D-glucose 1-phosphate + UTP + H(+) = UDP-alpha-D-glucose + diphosphate. Its pathway is carbohydrate metabolism; nucleotide-sugar metabolism. It participates in bacterial outer membrane biogenesis; lipopolysaccharide biosynthesis. In terms of biological role, may play a role in stationary phase survival. The chain is UTP--glucose-1-phosphate uridylyltransferase (galF) from Salmonella typhimurium (strain LT2 / SGSC1412 / ATCC 700720).